The following is a 33-amino-acid chain: Photosystem II reaction center protein Psb30 (33 aa).

Residues 5–25 (IVFQLTSLVLILAAGPLVVVL) traverse the membrane as a helical segment.

Belongs to the Psb30/Ycf12 family. As to quaternary structure, PSII is composed of 1 copy each of membrane proteins PsbA, PsbB, PsbC, PsbD, PsbE, PsbF, PsbH, PsbI, PsbJ, PsbK, PsbL, PsbM, PsbT, PsbX, PsbY, PsbZ, Psb30/Ycf12, peripheral proteins of the oxygen-evolving complex and a large number of cofactors. It forms dimeric complexes.

The protein localises to the plastid. It is found in the chloroplast thylakoid membrane. Its function is as follows. A core subunit of photosystem II (PSII), probably helps stabilize the reaction center. The polypeptide is Photosystem II reaction center protein Psb30 (Tetradesmus obliquus (Green alga)).